Here is a 219-residue protein sequence, read N- to C-terminus: Deoxyribose-phosphate aldolase (219 aa).

Residue D89 is the Proton donor/acceptor of the active site. Residue K151 is the Schiff-base intermediate with acetaldehyde of the active site. The Proton donor/acceptor role is filled by K180.

Belongs to the DeoC/FbaB aldolase family. DeoC type 1 subfamily.

Its subcellular location is the cytoplasm. It catalyses the reaction 2-deoxy-D-ribose 5-phosphate = D-glyceraldehyde 3-phosphate + acetaldehyde. The protein operates within carbohydrate degradation; 2-deoxy-D-ribose 1-phosphate degradation; D-glyceraldehyde 3-phosphate and acetaldehyde from 2-deoxy-alpha-D-ribose 1-phosphate: step 2/2. Its function is as follows. Catalyzes a reversible aldol reaction between acetaldehyde and D-glyceraldehyde 3-phosphate to generate 2-deoxy-D-ribose 5-phosphate. The polypeptide is Deoxyribose-phosphate aldolase (Clostridioides difficile (strain 630) (Peptoclostridium difficile)).